Reading from the N-terminus, the 549-residue chain is Lipase 3 (549 aa).

The N-terminal stretch at 1 to 15 is a signal peptide; that stretch reads MKLALALSLIASVAA. Cysteines 75 and 112 form a disulfide. S224 functions as the Acyl-ester intermediate in the catalytic mechanism. C283 and C292 are oxidised to a cystine. N329 carries N-linked (GlcNAc...) asparagine glycosylation. The active-site Charge relay system is the E356. The N-linked (GlcNAc...) asparagine glycan is linked to N366. Catalysis depends on H464, which acts as the Charge relay system.

This sequence belongs to the type-B carboxylesterase/lipase family. As to quaternary structure, monomer and homodimer.

The catalysed reaction is a triacylglycerol + H2O = a diacylglycerol + a fatty acid + H(+). This chain is Lipase 3 (LIP3), found in Diutina rugosa (Yeast).